Reading from the N-terminus, the 114-residue chain is Cystatin Pr15a (114 aa).

The signal sequence occupies residues 1-22 (MFTVKLLAFMVVAVSLQHLAEA). One can recognise a Cystatin domain in the interval 29–83 (GCPVEVDPNREDIKKSLAHVMAAKNSPDELVRIIKASTQVVNGIKYKVVFEVKNP).

It belongs to the cystatin family. Expressed by the venom gland (anterior main gland) (at protein level).

It localises to the secreted. This chain is Cystatin Pr15a, found in Platymeris rhadamanthus (Red spot assassin bug).